A 202-amino-acid polypeptide reads, in one-letter code: Nucleoside triphosphate pyrophosphatase (202 aa).

Catalysis depends on D79, which acts as the Proton acceptor.

Belongs to the Maf family. A divalent metal cation is required as a cofactor.

Its subcellular location is the cytoplasm. It carries out the reaction a ribonucleoside 5'-triphosphate + H2O = a ribonucleoside 5'-phosphate + diphosphate + H(+). The enzyme catalyses a 2'-deoxyribonucleoside 5'-triphosphate + H2O = a 2'-deoxyribonucleoside 5'-phosphate + diphosphate + H(+). Functionally, nucleoside triphosphate pyrophosphatase. May have a dual role in cell division arrest and in preventing the incorporation of modified nucleotides into cellular nucleic acids. This Bradyrhizobium diazoefficiens (strain JCM 10833 / BCRC 13528 / IAM 13628 / NBRC 14792 / USDA 110) protein is Nucleoside triphosphate pyrophosphatase.